A 344-amino-acid polypeptide reads, in one-letter code: MLVLGIESSCDETGLALYDTEAGLLSHALHSQIAMHRDYGGVVPELASRDHIRRVLPLLQQVLDEAGRSRADIDAIAFTQGPGLAGALLVGASVANALGFALNVPMVGVHHLEGHLLSPLLTREPPPFPFIALLVSGGHTQLMEVKGIGDYTLLGETLDDAAGEAFDKTAKLLGLGYPGGPEVSRLAEFGTPGAFDLPRPMLHSGNLDFSFAGLKTAVLTQTRKLANTCEQDRANLARAFVDAIVDVLAAKSFAALKQTGHKRLVVAGGVGANRQLRERLNQLGKQRKIDVYYPDLAFCTDNGAMIALAGAMRLQAAPDLAQHSYGYGVTPRWDLADIRLPSAA.

The Fe cation site is built by histidine 111 and histidine 115. Substrate contacts are provided by residues 134–138, aspartate 167, glycine 180, and asparagine 273; that span reads LVSGG. Residue aspartate 301 coordinates Fe cation.

This sequence belongs to the KAE1 / TsaD family. Fe(2+) is required as a cofactor.

It localises to the cytoplasm. The catalysed reaction is L-threonylcarbamoyladenylate + adenosine(37) in tRNA = N(6)-L-threonylcarbamoyladenosine(37) in tRNA + AMP + H(+). Its function is as follows. Required for the formation of a threonylcarbamoyl group on adenosine at position 37 (t(6)A37) in tRNAs that read codons beginning with adenine. Is involved in the transfer of the threonylcarbamoyl moiety of threonylcarbamoyl-AMP (TC-AMP) to the N6 group of A37, together with TsaE and TsaB. TsaD likely plays a direct catalytic role in this reaction. This chain is tRNA N6-adenosine threonylcarbamoyltransferase, found in Cupriavidus pinatubonensis (strain JMP 134 / LMG 1197) (Cupriavidus necator (strain JMP 134)).